The following is a 392-amino-acid chain: NADH-quinone oxidoreductase subunit D 1 (392 aa).

The protein belongs to the complex I 49 kDa subunit family. As to quaternary structure, NDH-1 is composed of 14 different subunits. Subunits NuoB, C, D, E, F, and G constitute the peripheral sector of the complex.

Its subcellular location is the cell inner membrane. The enzyme catalyses a quinone + NADH + 5 H(+)(in) = a quinol + NAD(+) + 4 H(+)(out). Functionally, NDH-1 shuttles electrons from NADH, via FMN and iron-sulfur (Fe-S) centers, to quinones in the respiratory chain. The immediate electron acceptor for the enzyme in this species is believed to be a menaquinone. Couples the redox reaction to proton translocation (for every two electrons transferred, four hydrogen ions are translocated across the cytoplasmic membrane), and thus conserves the redox energy in a proton gradient. In Cytophaga hutchinsonii (strain ATCC 33406 / DSM 1761 / CIP 103989 / NBRC 15051 / NCIMB 9469 / D465), this protein is NADH-quinone oxidoreductase subunit D 1.